A 166-amino-acid chain; its full sequence is Large ribosomal subunit protein uL10 (166 aa).

This sequence belongs to the universal ribosomal protein uL10 family. In terms of assembly, part of the ribosomal stalk of the 50S ribosomal subunit. The N-terminus interacts with L11 and the large rRNA to form the base of the stalk. The C-terminus forms an elongated spine to which L12 dimers bind in a sequential fashion forming a multimeric L10(L12)X complex.

Functionally, forms part of the ribosomal stalk, playing a central role in the interaction of the ribosome with GTP-bound translation factors. The chain is Large ribosomal subunit protein uL10 from Pseudomonas putida (strain GB-1).